The primary structure comprises 425 residues: Kynurenine/alpha-aminoadipate aminotransferase, mitochondrial (425 aa).

A mitochondrion-targeting transit peptide spans 1–29 (MNYSRFLTATSLARKPSPIRTTADILSKA). Substrate is bound at residue Arg20. Residue Ser40 is modified to Phosphoserine. Lys69 carries the N6-acetyllysine modification. Residue Tyr74 coordinates substrate. Lys172 bears the N6-succinyllysine mark. N6-acetyllysine is present on Lys179. Asn202 serves as a coordination point for substrate. Lys263 is modified (N6-(pyridoxal phosphate)lysine; alternate). N6-acetyllysine; alternate occurs at positions 263 and 339. N6-succinyllysine; alternate occurs at positions 263 and 339. Residue Lys351 is modified to N6-acetyllysine. An N6-acetyllysine; alternate modification is found at Lys367. Lys367 is modified (N6-succinyllysine; alternate). Arg399 serves as a coordination point for substrate. Lys422 carries the post-translational modification N6-acetyllysine.

The protein belongs to the class-I pyridoxal-phosphate-dependent aminotransferase family. As to quaternary structure, homodimer. Requires pyridoxal 5'-phosphate as cofactor. Expressed mainly in kidney and to a lesser amount in liver and brain.

The protein resides in the mitochondrion. It carries out the reaction L-kynurenine + 2-oxoglutarate = kynurenate + L-glutamate + H2O. It catalyses the reaction L-2-aminoadipate + 2-oxoglutarate = 2-oxoadipate + L-glutamate. The catalysed reaction is glycine + 2-oxoglutarate = glyoxylate + L-glutamate. The enzyme catalyses L-kynurenine + glyoxylate = kynurenate + glycine + H2O. It carries out the reaction 3-hydroxy-L-kynurenine + glyoxylate = xanthurenate + glycine + H2O. It catalyses the reaction 2-oxohexanoate + L-kynurenine = L-2-aminohexanoate + kynurenate + H2O. The catalysed reaction is 3-phenylpyruvate + L-kynurenine = kynurenate + L-phenylalanine + H2O. The enzyme catalyses 4-methylsulfanyl-2-oxobutanoate + L-kynurenine = kynurenate + L-methionine + H2O. It carries out the reaction 2-oxo-3-sulfanylpropanoate + L-kynurenine = kynurenate + L-cysteine + H2O. It catalyses the reaction indole-3-pyruvate + L-kynurenine = kynurenate + L-tryptophan + H2O. The catalysed reaction is 2-oxopentanoate + L-kynurenine = L-2-aminopentanoate + kynurenate + H2O. The enzyme catalyses 4-methyl-2-oxopentanoate + L-kynurenine = kynurenate + L-leucine + H2O. It carries out the reaction glyoxylate + L-methionine = 4-methylsulfanyl-2-oxobutanoate + glycine. It catalyses the reaction L-2-aminoadipate + glyoxylate = 2-oxoadipate + glycine. The catalysed reaction is L-tyrosine + glyoxylate = 3-(4-hydroxyphenyl)pyruvate + glycine. The enzyme catalyses glyoxylate + L-phenylalanine = 3-phenylpyruvate + glycine. It carries out the reaction L-tryptophan + glyoxylate = indole-3-pyruvate + glycine. It catalyses the reaction L-leucine + glyoxylate = 4-methyl-2-oxopentanoate + glycine. The catalysed reaction is 2-oxobutanoate + L-kynurenine = (2S)-2-aminobutanoate + kynurenate + H2O. The enzyme catalyses 2-oxoadipate + L-kynurenine = L-2-aminoadipate + kynurenate + H2O. It participates in amino-acid degradation; L-lysine degradation via saccharopine pathway; glutaryl-CoA from L-lysine: step 4/6. In terms of biological role, transaminase with broad substrate specificity. Has transaminase activity towards aminoadipate, kynurenine, methionine and glutamate. Shows activity also towards tryptophan, aspartate and hydroxykynurenine. Accepts a variety of oxo-acids as amino-group acceptors, with a preference for 2-oxoglutarate, 2-oxocaproic acid, phenylpyruvate and alpha-oxo-gamma-methiol butyric acid. Can also use glyoxylate as amino-group acceptor (in vitro). In Mus musculus (Mouse), this protein is Kynurenine/alpha-aminoadipate aminotransferase, mitochondrial.